We begin with the raw amino-acid sequence, 65 residues long: Light-harvesting protein B800/830/1020 alpha-2 chain (65 aa).

Residues 1–13 (MWKLWKFVDFRMT) are Cytoplasmic-facing. The chain crosses the membrane as a helical span at residues 14 to 34 (AVGFHIFFALIAFAVHFACIS). Residue His29 participates in a bacteriochlorophyll binding. At 35-65 (SERFNWLEGAPAAEYYMDENPGIWKRTSYDG) the chain is on the periplasmic side.

It belongs to the antenna complex alpha subunit family. In terms of assembly, the core complex is formed by different alpha and beta chains, binding bacteriochlorophyll molecules, and arranged most probably in tetrameric structures disposed around the reaction center. The non-pigmented gamma chains may constitute additional components.

The protein resides in the cell inner membrane. In terms of biological role, antenna complexes are light-harvesting systems, which transfer the excitation energy to the reaction centers. This chain is Light-harvesting protein B800/830/1020 alpha-2 chain, found in Halorhodospira halochloris (Ectothiorhodospira halochloris).